We begin with the raw amino-acid sequence, 299 residues long: Dye-decolorizing peroxidase YfeX (299 aa).

Position 215 (His215) interacts with heme.

Belongs to the DyP-type peroxidase family. It depends on heme b as a cofactor.

It is found in the cytoplasm. Functionally, has both general peroxidase activity and dye-decolorizing activity. Can catalyze the oxidation of 2,2'-azino-bis(3-ethylbenzothiazoline-6-sulphonic acid) (ABTS), and the phenolic compounds guaiacol and catechol. Also decolorizes the anthraquinone dye reactive blue 19 (RB19). The protein is Dye-decolorizing peroxidase YfeX of Escherichia coli O157:H7.